A 246-amino-acid chain; its full sequence is 14-3-3 protein beta/alpha (246 aa).

Methionine 1 is subject to N-acetylmethionine. Residue threonine 2 is modified to N-acetylthreonine; in 14-3-3 protein beta/alpha, N-terminally processed. Threonine 2 carries the post-translational modification Phosphothreonine. An N6-acetyllysine modification is found at lysine 5. Lysine 51 bears the N6-acetyllysine; alternate mark. Residue lysine 51 forms a Glycyl lysine isopeptide (Lys-Gly) (interchain with G-Cter in SUMO2); alternate linkage. The residue at position 60 (serine 60) is a Phosphoserine. The residue at position 70 (lysine 70) is an N6-acetyllysine. Residues tyrosine 84 and tyrosine 106 each carry the 3'-nitrotyrosine modification. Lysine 117 carries the N6-acetyllysine modification. A phosphoserine mark is found at serine 186 and serine 232.

The protein belongs to the 14-3-3 family. In terms of assembly, homodimer. Interacts with SAMSN1 and PRKCE. Interacts with AKAP13. Interacts with SSH1 and TORC2/CRTC2. Interacts with ABL1; the interaction results in cytoplasmic location of ABL1 and inhibition of cABL-mediated apoptosis. Interacts with ROR2 (dimer); the interaction results in phosphorylation of YWHAB on tyrosine residues. Interacts with GAB2. Interacts with YAP1 (phosphorylated form). Interacts with the phosphorylated (by AKT1) form of SRPK2. Interacts with PKA-phosphorylated AANAT. Interacts with MYO1C. Interacts with SIRT2. Interacts with the 'Thr-369' phosphorylated form of DAPK2. Interacts with PI4KB, TBC1D22A and TBC1D22B. Interacts with the 'Ser-1134' and 'Ser-1161' phosphorylated form of SOS1. Interacts (via phosphorylated form) with YWHAB; this interaction occurs in a protein kinase AKT1-dependent manner. Interacts with SLITRK1. Interacts with SYNPO2 (phosphorylated form); YWHAB competes with ACTN2 for interaction with SYNPO2. Interacts with RIPOR2 (via phosphorylated form); this interaction occurs in a chemokine-dependent manner and does not compete for binding of RIPOR2 with RHOA nor blocks inhibition of RIPOR2-mediated RHOA activity. Interacts with MARK2 and MARK3. Interacts with TESK1; the interaction is dependent on the phosphorylation of TESK1 'Ser-439' and inhibits TESK1 kinase activity. Interacts with MEFV. Interacts with HDAC4. Interacts with ADAM22 (via C-terminus). Isoform alpha differs from isoform beta in being phosphorylated. Phosphorylated on Ser-60 by protein kinase C delta type catalytic subunit in a sphingosine-dependent fashion. In terms of processing, isoform Short contains a N-acetylmethionine at position 1.

Its subcellular location is the cytoplasm. The protein localises to the melanosome. In terms of biological role, adapter protein implicated in the regulation of a large spectrum of both general and specialized signaling pathways. Binds to a large number of partners, usually by recognition of a phosphoserine or phosphothreonine motif. Binding generally results in the modulation of the activity of the binding partner. Negative regulator of osteogenesis. Blocks the nuclear translocation of the phosphorylated form (by AKT1) of SRPK2 and antagonizes its stimulatory effect on cyclin D1 expression resulting in blockage of neuronal apoptosis elicited by SRPK2. Negative regulator of signaling cascades that mediate activation of MAP kinases via AKAP13. The chain is 14-3-3 protein beta/alpha (Ywhab) from Mus musculus (Mouse).